A 592-amino-acid chain; its full sequence is MNNGRIVRINGPLVVADNMKNAQMYEVVEVGEPRLIGEITRIEGDRAFIQVYEDTSGIKPNEPVYRTGAPLSIELGPGLIGKIFDGLQRPLDSIKELTKSPFIARGIKVPSVDRKTKWHFIPKVKKGDKIEGGDIIGIVNETPLVEHRILVPPYVHGTLKEIVAEGDYTVEDPIAVVDMNGDEVPIRLMQRWPVRIPRPFREKLEPTEPLLTGTRVLDTIFPIAKGGTAAIPGPFGSGKTVTLQSLAKWSAAKIVIYVGCGERGNEMTDELRQFPSLKDPWTGRPLLERTILVANTSNMPVAAREASIYVGITMAEYFRDQGYDTLLVADSTSRWAEALRDLGGRMEEMPAEEGFPSYLPSRLAEYYERAGRVKTVGKPERFGSVTVASAVSPPGGDFTEPVTSQTLRFVKVFWPLDVSLAQARHYPAINWLQGFSAYVDLVANWWNTNVDPKWREMRDMMVRTLIREDELRQIVRLVGPESLAEKDKLVLETARLIKEAFLKQNAYDDIDAFSSPQKQARVMRLIYLFNTHASRLVERGIPTKKIVDSMGQLLPEIIRSKAAIKNDELNKYDELERKLISVFENLEKEAGT.

An ATP-binding site is contributed by 233–240; that stretch reads GPFGSGKT.

This sequence belongs to the ATPase alpha/beta chains family. In terms of assembly, has multiple subunits with at least A(3), B(3), C, D, E, F, H, I and proteolipid K(x).

The protein localises to the cell membrane. It catalyses the reaction ATP + H2O + 4 H(+)(in) = ADP + phosphate + 5 H(+)(out). Its function is as follows. Component of the A-type ATP synthase that produces ATP from ADP in the presence of a proton gradient across the membrane. The A chain is the catalytic subunit. This Saccharolobus islandicus (strain Y.N.15.51 / Yellowstone #2) (Sulfolobus islandicus) protein is A-type ATP synthase subunit A.